The following is a 526-amino-acid chain: Probable 1,4-alpha-glucan branching enzyme MT3115 (526 aa).

The active-site Nucleophile is glutamate 205. Arginine 251 and glycine 268 together coordinate substrate. Aspartate 344 (proton donor) is an active-site residue. Substrate-binding residues include tryptophan 396 and aspartate 462.

Belongs to the glycosyl hydrolase 57 family.

It carries out the reaction Transfers a segment of a (1-&gt;4)-alpha-D-glucan chain to a primary hydroxy group in a similar glucan chain.. Catalyzes the formation of branch points in alpha-glucans by cleavage of an alpha-1,4 glycosidic bond and subsequent transfer of the cleaved-off oligosaccharide to a new alpha-1,6 position. Is probably involved in the biosynthesis of 6-O-methylglucosyl lipopolysaccharides (MGLP). The chain is Probable 1,4-alpha-glucan branching enzyme MT3115 from Mycobacterium tuberculosis (strain CDC 1551 / Oshkosh).